An 860-amino-acid polypeptide reads, in one-letter code: Leucine--tRNA ligase (860 aa).

A 'HIGH' region motif is present at residues 42-52 (PYPSGRLHMGH). The 'KMSKS' region signature appears at 619–623 (KMSKS). An ATP-binding site is contributed by K622.

It belongs to the class-I aminoacyl-tRNA synthetase family.

It is found in the cytoplasm. It carries out the reaction tRNA(Leu) + L-leucine + ATP = L-leucyl-tRNA(Leu) + AMP + diphosphate. The polypeptide is Leucine--tRNA ligase (Klebsiella pneumoniae subsp. pneumoniae (strain ATCC 700721 / MGH 78578)).